Here is a 630-residue protein sequence, read N- to C-terminus: Pentatricopeptide repeat-containing protein At1g62670, mitochondrial (630 aa).

A mitochondrion-targeting transit peptide spans 1 to 22 (MRISFAIASTAKRFVHRSLVVR). 16 PPR repeats span residues 44 to 79 (TSYD…RPFP), 80 to 114 (SIIE…GIPH), 115 to 149 (NHYT…GYEP), 150 to 184 (NIVT…GYQP), 185 to 219 (NTVT…GCQP), 220 to 254 (DLVT…KLEP), 255 to 289 (GVLI…GIRP), 290 to 324 (NVVT…KINP), 325 to 359 (DVFT…SIDP), 360 to 394 (SIVT…HCFP), 395 to 429 (DVVT…GLVG), 430 to 464 (NTVT…GVPP), 465 to 499 (NIMT…KMEP), 500 to 534 (TIYT…GVKP), 535 to 569 (DVVA…GTLP), and 570 to 604 (NSGC…GFAG).

This sequence belongs to the PPR family. P subfamily.

The protein localises to the mitochondrion. The sequence is that of Pentatricopeptide repeat-containing protein At1g62670, mitochondrial from Arabidopsis thaliana (Mouse-ear cress).